A 213-amino-acid chain; its full sequence is Superoxide dismutase [Fe] (213 aa).

Fe cation-binding residues include H28, H82, D164, and H168.

This sequence belongs to the iron/manganese superoxide dismutase family. As to quaternary structure, homotetramer. Requires Fe cation as cofactor.

The enzyme catalyses 2 superoxide + 2 H(+) = H2O2 + O2. In terms of biological role, destroys superoxide anion radicals which are normally produced within the cells and which are toxic to biological systems. The polypeptide is Superoxide dismutase [Fe] (sodB) (Aquifex pyrophilus).